We begin with the raw amino-acid sequence, 208 residues long: Microtubule-associated protein Jupiter (208 aa).

Disordered regions lie at residues 24 to 43 and 82 to 106; these read RPPG…QTPR and RGQK…PGKN. At S30 the chain carries Phosphoserine. T41 carries the phosphothreonine modification. Residues 82–93 are compositionally biased toward basic and acidic residues; it reads RGQKTVDSHSRL. Phosphothreonine is present on residues T98 and T102. A phosphoserine mark is found at S111, S139, and S150. The segment at 132–208 is disordered; it reads HYNGKSGSVS…PPGGYSSGLW (77 aa). The segment covering 137–150 has biased composition (low complexity); the sequence is SGSVSSASSSVSSS. Composition is skewed to polar residues over residues 151–165 and 178–189; these read TENL…SEGN and EYSQRQESSNGG.

It belongs to the MAP Jupiter family. In terms of tissue distribution, ubiquitous expression throughout development. Expressed during cell division in the syncytial embryo. Expressed in developing photoreceptors of the eye imaginal disk of the third larval stage. In adults, highly expressed in neurons of the brain, concentrated in axons. In the adult ovaries, expression accumulates in the germarium and the polar follicular cells as well as in the oocyte along the microtubule network.

It localises to the nucleus. It is found in the cytoplasm. The protein resides in the cytoskeleton. The protein localises to the spindle. In terms of biological role, binds to all microtubule populations. The polypeptide is Microtubule-associated protein Jupiter (Drosophila melanogaster (Fruit fly)).